The chain runs to 220 residues: Pyrrolidone-carboxylate peptidase (220 aa).

Residues Glu80, Cys143, and His167 contribute to the active site.

This sequence belongs to the peptidase C15 family. In terms of assembly, homotetramer.

It localises to the cytoplasm. The enzyme catalyses Release of an N-terminal pyroglutamyl group from a polypeptide, the second amino acid generally not being Pro.. Its function is as follows. Removes 5-oxoproline from various penultimate amino acid residues except L-proline. This is Pyrrolidone-carboxylate peptidase (pcp) from Thermococcus litoralis (strain ATCC 51850 / DSM 5473 / JCM 8560 / NS-C).